Consider the following 1507-residue polypeptide: Lhr helicase/ probable uracil glycosylase (1507 aa).

The interval 1 to 856 is lhr-Core; that stretch reads MTTNGADPLG…ASLLFGYVGA (856 aa). Positions 24, 31, 54, and 55 each coordinate ATP. The Helicase ATP-binding domain maps to 35–226; that stretch reads WSAISEGNNT…FLSGQAPTTI (192 aa). SsDNA-binding residues include arginine 122, arginine 131, threonine 145, serine 148, and methionine 152. Positions 170 and 171 each coordinate ATP. A DEAH box motif is present at residues 170 to 173; it reads DEVH. Serine 253, tryptophan 255, and arginine 279 together coordinate ssDNA. Positions 257–451 constitute a Helicase C-terminal domain; that stretch reads DVEERIVDLV…VLAQHTVAVA (195 aa). Residues isoleucine 377, arginine 394, and histidine 397 each contribute to the ATP site. Lysine 410, glutamine 518, arginine 519, isoleucine 528, tryptophan 597, aspartate 600, and arginine 777 together coordinate ssDNA. The tract at residues 436-529 is WH domain; the sequence is PANPLDVLAQ…LAVTSGGAIP (94 aa). Residues 530-856 form a domain 4 region; sequence DRGMFTVYLA…ASLLFGYVGA (327 aa). The interval 857 to 1507 is CTD; it reads FMYEGDSPLA…SRTPRGLRLR (651 aa).

This sequence belongs to the Lhr helicase family. As to quaternary structure, monomer. Homooligomerizes, possibly a homotetramer. It depends on Ca(2+) as a cofactor.

It carries out the reaction Couples ATP hydrolysis with the unwinding of duplex DNA by translocating in the 3'-5' direction.. The enzyme catalyses ATP + H2O = ADP + phosphate + H(+). The catalysed reaction is Hydrolyzes single-stranded DNA or mismatched double-stranded DNA and polynucleotides, releasing free uracil.. A 3'-5' helicase involved in repair of at least 3 types of DNA cross-links, mitomycin C (MMC), cisplatin, and psoralen-UVA. Translocates 3'-to-5' on single-stranded (ss)DNA, unwinding any encountered duplex nucleic acid. A 3'-ssDNA loading strand of at least 15 nucleotides is required for helicase activity. An RNA:DNA hybrid with a 3'-ssDNA loading strand is an 8-fold better helicase substrate than 3'-tailed double-stranded (ds)DNA; substrates where the helicase loads on a 3'-ssRNA tail (DNA:RNA and RNA:RNA) are not unwound. Only (d)ATP is hydrolyzed by the protein, which has no ATPase activity in the absence of ssDNA or ssRNA. Arg-279 and Trp-597 are needed to couple ATP hydrolysis to mechanical work; a salt bridge between Arg-280 and Glu-550 closes a clamp around the ssDNA that is not large enough for dsDNA, while Ile-528 wedges between bases of the loading strand. In terms of biological role, excises uracil residues from ssDNA. Uracil residues in DNA can arise as a result of misincorporation of dUMP residues by DNA polymerase or due to deamination of cytosine. This Mycolicibacterium smegmatis (strain ATCC 700084 / mc(2)155) (Mycobacterium smegmatis) protein is Lhr helicase/ probable uracil glycosylase.